The sequence spans 380 residues: Cytochrome b (380 aa).

A run of 4 helical transmembrane segments spans residues 33 to 53 (FGSLLGLCLASQILTGLFLAM), 77 to 98 (WLIRNMHANGASFFFICLYLHI), 113 to 133 (WNVGVVLLLLVMMTAFVGYVL), and 178 to 198 (FFAFHFLFPFVILAAAVLHLL). His83 and His97 together coordinate heme b. Positions 182 and 196 each coordinate heme b. His201 contacts a ubiquinone. A run of 4 helical transmembrane segments spans residues 226–246 (YKDLLGFAVLLMGLTSLALFS), 288–308 (LGGVLALLASILILMVVPFLH), 320–340 (ASQFLFWTLVADVVVLTWIGG), and 347–367 (FIIIGQVASVLYFSLFLVLFP).

Belongs to the cytochrome b family. In terms of assembly, the cytochrome bc1 complex contains 3 respiratory subunits (MT-CYB, CYC1 and UQCRFS1), 2 core proteins (UQCRC1 and UQCRC2) and probably 6 low-molecular weight proteins. Heme b serves as cofactor.

Its subcellular location is the mitochondrion inner membrane. Functionally, component of the ubiquinol-cytochrome c reductase complex (complex III or cytochrome b-c1 complex) that is part of the mitochondrial respiratory chain. The b-c1 complex mediates electron transfer from ubiquinol to cytochrome c. Contributes to the generation of a proton gradient across the mitochondrial membrane that is then used for ATP synthesis. In Scomber scombrus (Atlantic mackerel), this protein is Cytochrome b (mt-cyb).